The chain runs to 585 residues: Bestrophin-1 (585 aa).

Residues 1 to 31 lie on the Cytoplasmic side of the membrane; it reads MTITYTSQVANARLGSFSRLLLCWRGSIYKL. Ca(2+) is bound at residue Ala10. Residues 32 to 51 traverse the membrane as a helical segment; sequence LYGEFFIFLLCYYIIRFIYR. The Extracellular segment spans residues 52-60; it reads LALTEEQQL. Residues 61–82 form a helical membrane-spanning segment; it reads MFEKLTLYCDSYIQLIPISFVL. The Cytoplasmic segment spans residues 83-237; sequence GFYVTLVVTR…DWISIPLVYT (155 aa). A helical membrane pass occupies residues 238-255; that stretch reads QVVTVAVYSFFLTCLVGR. Topologically, residues 256-274 are extracellular; it reads QFLNPAKAYPGHELDLVVP. Residues 275–288 traverse the membrane as a helical segment; that stretch reads VFTFLQFFFYVGWL. The Cytoplasmic portion of the chain corresponds to 289–585; the sequence is KVAEQLINPF…ALENRDEAHS (297 aa). The Ca(2+) site is built by Gln293, Asn296, Asp301, and Asp304. The interval 346–379 is auto-inhibitory segment; the sequence is PYTAASAQFRRASFMGSTFNISLNKEEMEFQPNQ.

The protein belongs to the anion channel-forming bestrophin (TC 1.A.46) family. Calcium-sensitive chloride channel subfamily. As to quaternary structure, interacts with YWHAG; this interaction promotes the ligand-gated L-glutamate channel activity leading to the positive regulation of NMDA glutamate receptor activity through the L-glutamate secretion.

The protein localises to the cell membrane. Its subcellular location is the basolateral cell membrane. It catalyses the reaction chloride(in) = chloride(out). The catalysed reaction is hydrogencarbonate(in) = hydrogencarbonate(out). It carries out the reaction 4-aminobutanoate(in) = 4-aminobutanoate(out). The enzyme catalyses L-glutamate(out) = L-glutamate(in). Functionally, ligand-gated anion channel that allows the movement of anions across cell membranes when activated by calcium (Ca2+). Allows the movement of chloride and hydrogencarbonate. Found in a partially open conformation leading to significantly smaller chloride movement. Upon F2R/PAR-1 activation, the sequestered calcium is released into the cytosol of astrocytes, leading to the (Ca2+)-dependent release of L-glutamate into the synaptic cleft that targets the neuronal postsynaptic GRIN2A/NMDAR receptor resulting in the synaptic plasticity regulation. Upon activation of the norepinephrine-alpha-1 adrenergic receptor signaling pathway, transports as well D-serine than L-glutamate in a (Ca2+)-dependent manner, leading to activation of adjacent NMDAR receptors and therefore regulates the heterosynaptic long-term depression and metaplasticity during initial memory acquisition. Releases the 4-aminobutanoate neurotransmitter in a (Ca2+)-dependent manner, and participates in its tonic release from cerebellar glial cells. This Macaca fascicularis (Crab-eating macaque) protein is Bestrophin-1 (BEST1).